The sequence spans 940 residues: Translation initiation factor IF-2 (940 aa).

Disordered stretches follow at residues 48–264 (ESFG…VESK) and 278–351 (QVAE…TERK). Basic and acidic residues-rich tracts occupy residues 65–95 (SKPE…KEEV), 112–125 (FKAE…EQAA), 155–206 (NNER…REAA), 232–258 (RTSE…KFEE), and 292–301 (ARPDKKRDFN). Positions 314–332 (NRNSQNQVRNQRTSNWNNN) are enriched in low complexity. The 168-residue stretch at 442 to 609 (ERPPVVTIMG…TVLLVAEIQE (168 aa)) folds into the tr-type G domain. The tract at residues 451 to 458 (GHVDHGKT) is G1. 451–458 (GHVDHGKT) is a binding site for GTP. The G2 stretch occupies residues 476-480 (GITQH). The G3 stretch occupies residues 497 to 500 (DTPG). GTP-binding positions include 497-501 (DTPGH) and 551-554 (NKID). The segment at 551 to 554 (NKID) is G4. A G5 region spans residues 587–589 (SAK).

It belongs to the TRAFAC class translation factor GTPase superfamily. Classic translation factor GTPase family. IF-2 subfamily.

It localises to the cytoplasm. Its function is as follows. One of the essential components for the initiation of protein synthesis. Protects formylmethionyl-tRNA from spontaneous hydrolysis and promotes its binding to the 30S ribosomal subunits. Also involved in the hydrolysis of GTP during the formation of the 70S ribosomal complex. This is Translation initiation factor IF-2 from Streptococcus suis (strain 98HAH33).